A 799-amino-acid chain; its full sequence is Leucine--tRNA ligase (799 aa).

The short motif at 39 to 50 (PYPSGAGLHMGH) is the 'HIGH' region element. The 'KMSKS' region signature appears at 575–579 (KMSKS). Lys-578 is an ATP binding site.

Belongs to the class-I aminoacyl-tRNA synthetase family.

The protein localises to the cytoplasm. It carries out the reaction tRNA(Leu) + L-leucine + ATP = L-leucyl-tRNA(Leu) + AMP + diphosphate. This is Leucine--tRNA ligase from Malacoplasma penetrans (strain HF-2) (Mycoplasma penetrans).